Reading from the N-terminus, the 243-residue chain is Probable transcriptional regulatory protein Smal_3128 (243 aa).

This sequence belongs to the TACO1 family.

Its subcellular location is the cytoplasm. This is Probable transcriptional regulatory protein Smal_3128 from Stenotrophomonas maltophilia (strain R551-3).